The chain runs to 183 residues: Anterior gradient protein 1 (183 aa).

Positions methionine 1–glycine 18 are cleaved as a signal peptide.

It belongs to the AGR family. In terms of tissue distribution, from stage 18 (neurula) onward, expressed in the cement gland until it degenerates. More weakly expressed in the adjacent hatching gland.

It is found in the secreted. Does not appear to be required for cement gland formation. The protein is Anterior gradient protein 1 (ag1) of Xenopus laevis (African clawed frog).